A 190-amino-acid polypeptide reads, in one-letter code: Imidazoleglycerol-phosphate dehydratase (190 aa).

The protein belongs to the imidazoleglycerol-phosphate dehydratase family.

It localises to the cytoplasm. The catalysed reaction is D-erythro-1-(imidazol-4-yl)glycerol 3-phosphate = 3-(imidazol-4-yl)-2-oxopropyl phosphate + H2O. Its pathway is amino-acid biosynthesis; L-histidine biosynthesis; L-histidine from 5-phospho-alpha-D-ribose 1-diphosphate: step 6/9. This is Imidazoleglycerol-phosphate dehydratase from Sulfurimonas denitrificans (strain ATCC 33889 / DSM 1251) (Thiomicrospira denitrificans (strain ATCC 33889 / DSM 1251)).